The primary structure comprises 120 residues: Accessory gland protein Acp53Ea (120 aa).

An N-terminal signal peptide occupies residues Met-1–Ala-23.

Main cells of accessory gland and seminal fluid.

The protein resides in the secreted. In terms of biological role, responsible for physiological and behavioral changes in mated female flies. In Drosophila melanogaster (Fruit fly), this protein is Accessory gland protein Acp53Ea (Acp53Ea).